A 149-amino-acid polypeptide reads, in one-letter code: Thioredoxin-like protein 4B (149 aa).

It belongs to the DIM1 family. As to quaternary structure, homodimer. Interacts with the U5-102 kDa protein subunit of the spliceosome.

It localises to the nucleus. Functionally, essential role in pre-mRNA splicing. Required in cell cycle progression for S/G(2) transition. The protein is Thioredoxin-like protein 4B (Txnl4b) of Mus musculus (Mouse).